Here is a 415-residue protein sequence, read N- to C-terminus: FXa-directed anticoagulant (415 aa).

Residues 1 to 17 (MYLKIVILVTFPLVCFT) form the signal peptide. N-linked (GlcNAc...) asparagine glycosylation is found at N117, N166, N216, and N320.

The protein belongs to the serpin family. (Microbial infection) Interacts with Zika virus envelope protein E and Zika virus-like particles; the interaction does not affect Zika virus replication in human endothelial cells and keratinocytes. The N-terminus is blocked. As to expression, female salivary gland (at protein level). Not detected in female carcass without head and salivary glands. Not detected in male tissues.

It localises to the secreted. Functionally, anticoagulant serpin-type protein inhibiting host coagulation factor Xa (F10). Does not inhibit host thrombin (F2) and trypsin. In terms of biological role, (Microbial infection) Does not affect Zika virus replication in human endothelial cells and keratinocytes. The protein is FXa-directed anticoagulant of Aedes aegypti (Yellowfever mosquito).